Here is a 153-residue protein sequence, read N- to C-terminus: MAREPEKTVCQNRKARHEYFILETYEAGLVLKGTEVKSLRAGKANLKDSFARIQNGELWLENMHVSPYEQGNRFNHEPKRPRKLLMHKSEIMRLWGKTREKGLALIPLRVYFKDGRAKVELALAKGKKLYDKRDDIAKREAEREIARAARGKA.

This sequence belongs to the SmpB family.

The protein resides in the cytoplasm. In terms of biological role, required for rescue of stalled ribosomes mediated by trans-translation. Binds to transfer-messenger RNA (tmRNA), required for stable association of tmRNA with ribosomes. tmRNA and SmpB together mimic tRNA shape, replacing the anticodon stem-loop with SmpB. tmRNA is encoded by the ssrA gene; the 2 termini fold to resemble tRNA(Ala) and it encodes a 'tag peptide', a short internal open reading frame. During trans-translation Ala-aminoacylated tmRNA acts like a tRNA, entering the A-site of stalled ribosomes, displacing the stalled mRNA. The ribosome then switches to translate the ORF on the tmRNA; the nascent peptide is terminated with the 'tag peptide' encoded by the tmRNA and targeted for degradation. The ribosome is freed to recommence translation, which seems to be the essential function of trans-translation. This Desulforudis audaxviator (strain MP104C) protein is SsrA-binding protein.